The sequence spans 323 residues: Alpha-tubulin N-acetyltransferase 1 (323 aa).

The N-acetyltransferase domain occupies 1–190; sequence MEFPFDVDAL…NNFVIFEGFF (190 aa). Lys56 carries the N6-acetyllysine; by autocatalysis modification. 124-137 lines the acetyl-CoA pocket; that stretch reads FYIHESVQRHGHGR. Lys146 carries the N6-acetyllysine; by autocatalysis modification. Residue 160-169 participates in acetyl-CoA binding; sequence SQKLLKFLNK. The segment at 196 to 239 is disordered; the sequence is PPAPSLRATRHSRAAAVDPTPTAPARKLPPKRAEGDIKPYSSSD. A compositionally biased stretch (low complexity) spans 209–220; that stretch reads AAAVDPTPTAPA. A compositionally biased stretch (basic and acidic residues) spans 226 to 239; it reads KRAEGDIKPYSSSD. Residues Lys233 and Lys244 each carry the N6-acetyllysine; by autocatalysis modification. Positions 252–287 are disordered; that stretch reads PLNRAPRRATPPAHPPPRSSSLGNSPERGPLRPFVP. Phosphoserine is present on residues Ser272 and Ser276. Arg305 is subject to Asymmetric dimethylarginine. Ser315 carries the post-translational modification Phosphoserine. Residue Arg323 is modified to Omega-N-methylarginine.

Belongs to the acetyltransferase ATAT1 family. As to quaternary structure, component of the BBSome complex. Interacts with AP2 alpha-adaptins, including AP2A2, but not with AP1 gamma-adaptin (AP1G1/AP1G2); this interaction is required for efficient alpha-tubulin acetylation, hence clathrin-coated pits are sites of microtubule acetylation. Post-translationally, autoacetylation strongly increases tubulin acetylation.

It is found in the cytoplasm. Its subcellular location is the membrane. It localises to the clathrin-coated pit. The protein resides in the cell junction. The protein localises to the focal adhesion. It is found in the cell projection. Its subcellular location is the axon. It localises to the cytoskeleton. The protein resides in the spindle. The catalysed reaction is L-lysyl-[alpha-tubulin] + acetyl-CoA = N(6)-acetyl-L-lysyl-[alpha-tubulin] + CoA + H(+). In terms of biological role, specifically acetylates 'Lys-40' in alpha-tubulin on the lumenal side of microtubules. Promotes microtubule destabilization and accelerates microtubule dynamics; this activity may be independent of acetylation activity. Acetylates alpha-tubulin with a slow enzymatic rate, due to a catalytic site that is not optimized for acetyl transfer. Enters the microtubule through each end and diffuses quickly throughout the lumen of microtubules. Acetylates only long/old microtubules because of its slow acetylation rate since it does not have time to act on dynamically unstable microtubules before the enzyme is released. Required for normal sperm flagellar function. Promotes directional cell locomotion and chemotaxis, through AP2A2-dependent acetylation of alpha-tubulin at clathrin-coated pits that are concentrated at the leading edge of migrating cells. May facilitate primary cilium assembly. The sequence is that of Alpha-tubulin N-acetyltransferase 1 from Macaca mulatta (Rhesus macaque).